The following is an 80-amino-acid chain: Clavanin-C (80 aa).

The N-terminal stretch at 1 to 19 (MKTTILILLILGLGINAKS) is a signal peptide. A propeptide spanning residues 20 to 29 (LEERKSEEEK) is cleaved from the precursor. Phe52 bears the Phenylalanine amide mark. Positions 54 to 80 (DDQQDNGKFYGHYAEDNGKHWYDTGDQ) are excised as a propeptide.

In terms of tissue distribution, hemocytes and pharyngeal tissues.

The protein resides in the secreted. Functionally, has antimicrobial activity against E.coli, L.monocytogenes and C.albicans. The chain is Clavanin-C from Styela clava (Sea squirt).